The primary structure comprises 64 residues: Large ribosomal subunit protein bL35 (64 aa).

This sequence belongs to the bacterial ribosomal protein bL35 family.

In Shewanella baltica (strain OS223), this protein is Large ribosomal subunit protein bL35.